The following is a 293-amino-acid chain: MLPKRAYPVQDSNVHSQEKKIIAGNWKMNINHSQAVSYLQELNWRLIDNGHDFDACEIAVFPPFTDLRSVQTLVASDDIQISYGAQDVSAFSDGAHTGQISAQFLKDLDCKYVLIGHSEQRCLPCYPGNNSAINELNNKHDGLIANKLLRSFAAGICPILCIGDISPGDHFDATLSRFRSVLSHLKAISDKKHSIGYALGSKTHFLDSDQLHMLVAYEPSSAINSGNCANSGDIVRMAAAIKDIVNVRVLYGGGVNLFNASAVFNEDLLDGILVGRASLNASDFASLIKTCCL.

Residue 25–27 participates in substrate binding; that stretch reads NWK. Histidine 117 serves as the catalytic Electrophile. Glutamate 218 acts as the Proton acceptor in catalysis.

It belongs to the triosephosphate isomerase family. As to quaternary structure, homodimer.

It localises to the cytoplasm. It catalyses the reaction D-glyceraldehyde 3-phosphate = dihydroxyacetone phosphate. It functions in the pathway carbohydrate biosynthesis; gluconeogenesis. The protein operates within carbohydrate degradation; glycolysis; D-glyceraldehyde 3-phosphate from glycerone phosphate: step 1/1. Its function is as follows. Involved in the gluconeogenesis. Catalyzes stereospecifically the conversion of dihydroxyacetone phosphate (DHAP) to D-glyceraldehyde-3-phosphate (G3P). This is Triosephosphate isomerase from Tropheryma whipplei (strain TW08/27) (Whipple's bacillus).